The sequence spans 1226 residues: Methionine synthase (1226 aa).

Residues 6-326 (RQQIEAQLKQ…EHIRQMAQAV (321 aa)) form the Hcy-binding domain. The Zn(2+) site is built by C248, C311, and C312. Residues 357–618 (FINVGERTNV…VPEKLREAVE (262 aa)) form the Pterin-binding domain. One can recognise a B12-binding N-terminal domain in the interval 651–745 (SALEWRTWPV…FINAEKQSGS (95 aa)). Residues E695, 757-761 (GDVHD), H760, S805, T809, and A861 each bind methylcob(III)alamin. In terms of domain architecture, B12-binding spans 747-882 (NGKILLATVK…SDERRPAFIE (136 aa)). The 329-residue stretch at 898 to 1226 (KKPRTKPVTL…EKWLGPNING (329 aa)) folds into the AdoMet activation domain. Residues D948, R1136, and 1191 to 1192 (YF) contribute to the S-adenosyl-L-methionine site.

It belongs to the vitamin-B12 dependent methionine synthase family. Methylcob(III)alamin serves as cofactor. Requires Zn(2+) as cofactor.

It carries out the reaction (6S)-5-methyl-5,6,7,8-tetrahydrofolate + L-homocysteine = (6S)-5,6,7,8-tetrahydrofolate + L-methionine. The protein operates within amino-acid biosynthesis; L-methionine biosynthesis via de novo pathway; L-methionine from L-homocysteine (MetH route): step 1/1. Catalyzes the transfer of a methyl group from methyl-cobalamin to homocysteine, yielding enzyme-bound cob(I)alamin and methionine. Subsequently, remethylates the cofactor using methyltetrahydrofolate. This chain is Methionine synthase (metH), found in Vibrio parahaemolyticus serotype O3:K6 (strain RIMD 2210633).